Here is a 453-residue protein sequence, read N- to C-terminus: Dibenzothiophene-sulfone monooxygenase (453 aa).

Positions 59, 106, 156, 160, and 231 each coordinate FMN.

This sequence belongs to the NtaA/SnaA/DszA monooxygenase family. In terms of assembly, homodimer.

The protein resides in the cytoplasm. The catalysed reaction is dibenzothiophene 5,5-dioxide + FMNH2 + NADH + O2 = 2'-hydroxybiphenyl-2-sulfinate + FMN + NAD(+) + H2O + H(+). Its pathway is sulfur metabolism; dibenzothiophene degradation. Its function is as follows. Catalyzes the second step of the '4S' desulfurization pathway that removes covalently bound sulfur from dibenzothiophene (DBT) without breaking carbon-carbon bonds. Metabolizes DBT-sulfone (DBTO2 or DBT 5,5-dioxide) to 2-(2'-hydroxyphenyl)benzene sulphinate (HBPS). This is Dibenzothiophene-sulfone monooxygenase from Rhodococcus erythropolis (Arthrobacter picolinophilus).